Reading from the N-terminus, the 282-residue chain is Putative phosphite transport system permease protein HtxC (282 aa).

The next 4 membrane-spanning stretches (helical) occupy residues 23–43 (HFAT…VCQI), 81–101 (LAMA…LALM), 130–150 (VYAL…VLAI), and 239–259 (FNKM…IDFI). Residues 77-260 (AGETLAMATI…LMVSAIDFIS (184 aa)) form the ABC transmembrane type-1 domain.

It belongs to the binding-protein-dependent transport system permease family.

The protein resides in the cell inner membrane. Probably forms part of a binding-protein-dependent hypophosphite transporter. The chain is Putative phosphite transport system permease protein HtxC (htxC) from Stutzerimonas stutzeri (Pseudomonas stutzeri).